The chain runs to 1381 residues: Peroxisomal ATPase PEX6 (1381 aa).

The segment covering 1-10 has biased composition (polar residues); the sequence is MTAPNSTPAS. Disordered regions lie at residues 1 to 23, 247 to 315, 333 to 374, and 467 to 499; these read MTAPNSTPASSRKRVRRRRQDKP, VRTS…DNLS, TVTG…DRPR, and YSSRSATRSHHSRHDSRNSSFFEAQSQKSNPPA. The segment covering 11 to 20 has biased composition (basic residues); that stretch reads SRKRVRRRRQ. Composition is skewed to acidic residues over residues 270–284 and 296–315; these read AEDDEDAYFSAAEED and TDADDTEFEPQAGEDEDNLS. 3 stretches are compositionally biased toward polar residues: residues 333–345, 355–367, and 487–499; these read TVTGQSTIGTGTP, GPGSVISSYTATT, and FFEAQSQKSNPPA. 1031–1038 contributes to the ATP binding site; sequence GPPGTGKT. 2 stretches are compositionally biased toward basic and acidic residues: residues 1294–1305 and 1337–1350; these read GAKDKDKKKEGA and STKKDGKGKGKAAD. The segment at 1294–1381 is disordered; sequence GAKDKDKKKE…GGDEDEGLYD (88 aa). The span at 1372 to 1381 shows a compositional bias: acidic residues; that stretch reads GGDEDEGLYD.

This sequence belongs to the AAA ATPase family. Interacts with PEX1; forming the PEX1-PEX6 AAA ATPase complex, which is composed of a heterohexamer formed by a trimer of PEX1-PEX6 dimers.

The protein resides in the cytoplasm. It is found in the cytosol. It localises to the peroxisome membrane. The catalysed reaction is ATP + H2O = ADP + phosphate + H(+). Component of the PEX1-PEX6 AAA ATPase complex, a protein dislocase complex that mediates the ATP-dependent extraction of the PEX5 receptor from peroxisomal membranes, an essential step for PEX5 recycling. Specifically recognizes PEX5 monoubiquitinated at 'Cys-6', and pulls it out of the peroxisome lumen through the PEX2-PEX10-PEX12 retrotranslocation channel. Extraction by the PEX1-PEX6 AAA ATPase complex is accompanied by unfolding of the TPR repeats and release of bound cargo from PEX5. The chain is Peroxisomal ATPase PEX6 (pex-6) from Neurospora crassa (strain ATCC 24698 / 74-OR23-1A / CBS 708.71 / DSM 1257 / FGSC 987).